A 214-amino-acid chain; its full sequence is Redox-sensing transcriptional repressor Rex (214 aa).

Positions 17–56 form a DNA-binding region, H-T-H motif; it reads LYYRIFKRFYADQVEKASSKQIADAMGIDSATVRRDFSYF. An NAD(+)-binding site is contributed by 91-96; that stretch reads GCGNIG.

It belongs to the transcriptional regulatory Rex family. Homodimer.

It localises to the cytoplasm. Its function is as follows. Modulates transcription in response to changes in cellular NADH/NAD(+) redox state. This Streptococcus equi subsp. zooepidemicus (strain H70) protein is Redox-sensing transcriptional repressor Rex.